Consider the following 411-residue polypeptide: Glutamate dehydrogenase 1, mitochondrial (411 aa).

The transit peptide at 1 to 18 directs the protein to the mitochondrion; that stretch reads MNALAATSRNFKQAAKLL. K102 is an active-site residue.

It belongs to the Glu/Leu/Phe/Val dehydrogenases family.

The protein localises to the mitochondrion. The enzyme catalyses L-glutamate + NAD(+) + H2O = 2-oxoglutarate + NH4(+) + NADH + H(+). The catalysed reaction is L-glutamate + NADP(+) + H2O = 2-oxoglutarate + NH4(+) + NADPH + H(+). This chain is Glutamate dehydrogenase 1, mitochondrial (GDH1), found in Oryza sativa subsp. indica (Rice).